The chain runs to 449 residues: Phosphoglucosamine mutase (449 aa).

The active-site Phosphoserine intermediate is the serine 100. Residues serine 100, aspartate 240, aspartate 242, and aspartate 244 each contribute to the Mg(2+) site. Serine 100 carries the phosphoserine modification.

It belongs to the phosphohexose mutase family. The cofactor is Mg(2+). In terms of processing, activated by phosphorylation.

The catalysed reaction is alpha-D-glucosamine 1-phosphate = D-glucosamine 6-phosphate. Catalyzes the conversion of glucosamine-6-phosphate to glucosamine-1-phosphate. This chain is Phosphoglucosamine mutase, found in Clostridium novyi (strain NT).